A 465-amino-acid polypeptide reads, in one-letter code: Ribulose bisphosphate carboxylase large chain (465 aa).

Residue K4 is modified to N6,N6,N6-trimethyllysine. 2 residues coordinate substrate: N113 and T163. The Proton acceptor role is filled by K165. Substrate is bound at residue K167. Positions 191, 193, and 194 each coordinate Mg(2+). N6-carboxylysine is present on K191. The active-site Proton acceptor is H284. Residues R285, H317, and S369 each coordinate substrate.

Belongs to the RuBisCO large chain family. Type I subfamily. As to quaternary structure, heterohexadecamer of 8 large chains and 8 small chains; disulfide-linked. The disulfide link is formed within the large subunit homodimers. Mg(2+) serves as cofactor. The disulfide bond which can form in the large chain dimeric partners within the hexadecamer appears to be associated with oxidative stress and protein turnover.

It localises to the plastid. Its subcellular location is the chloroplast. The catalysed reaction is 2 (2R)-3-phosphoglycerate + 2 H(+) = D-ribulose 1,5-bisphosphate + CO2 + H2O. It carries out the reaction D-ribulose 1,5-bisphosphate + O2 = 2-phosphoglycolate + (2R)-3-phosphoglycerate + 2 H(+). Functionally, ruBisCO catalyzes two reactions: the carboxylation of D-ribulose 1,5-bisphosphate, the primary event in carbon dioxide fixation, as well as the oxidative fragmentation of the pentose substrate in the photorespiration process. Both reactions occur simultaneously and in competition at the same active site. This Humiria balsamifera (Tauroniro) protein is Ribulose bisphosphate carboxylase large chain.